We begin with the raw amino-acid sequence, 327 residues long: Movement protein (327 aa).

Residues 297 to 327 (IASSSSTENELARVSQNIDLLKNKLKEICGE) adopt a coiled-coil conformation.

This sequence belongs to the caulimoviridae movement protein family. In terms of assembly, homotrimer, through the coiled-coil domain. Interacts with VAP. May interact (via N-terminus) with host prenylated Rab acceptor protein 1D (PRA1D).

It localises to the host cell junction. Its subcellular location is the host plasmodesma. Its function is as follows. Transports viral genome to neighboring plant cells directly through plasmosdesmata, without any budding. The movement protein allows efficient cell to cell propagation, by bypassing the host cell wall barrier. Acts by forming tubules structures that increase the size exclusion limit (SEL) of plasmodesmata, thereby allowing viral ribonucleocapsids to spread directly to neighboring cells. In Cauliflower mosaic virus (strain D/H) (CaMV), this protein is Movement protein.